The following is a 350-amino-acid chain: Leucine-rich repeat-containing protein 58 (350 aa).

LRR repeat units lie at residues 14–34, 35–56, 58–80, 81–102, 105–125, 128–149, 151–173, 174–195, 197–218, and 220–240; these read NLTH…NKRK, DVQQ…VASF, HLHL…LGLT, KLKT…KEMG, RLEV…QFLQ, TLKS…IENL, SLEF…ANLP, YLSY…LAQV, SLRS…ILSL, and HLHE…RDLT.

The protein is Leucine-rich repeat-containing protein 58 (lrrc58) of Xenopus laevis (African clawed frog).